The following is a 130-amino-acid chain: MSGRAKQGGKARAKAKSRSFRAGLQFPVGRVHRLLRQGNYAERIGAGTPVYLAAVLEYLTAEILELAGNAARDNKKTRIIPRHLQLAIRNDEELNKLLGRVTIAQGGVLPNIQAVLLPKKTESHHKSQTK.

Ser2 is modified (phosphoserine; by RPS6KA5). Citrulline; alternate is present on Arg4. A Symmetric dimethylarginine; by PRMT5; alternate modification is found at Arg4. Lys6 and Lys10 each carry N6-(2-hydroxyisobutyryl)lysine; alternate. 2 positions are modified to N6-acetyllysine; alternate: Lys6 and Lys10. Lys10 carries the post-translational modification N6-lactoyllysine; alternate. Lys75, Lys76, and Lys96 each carry N6-(2-hydroxyisobutyryl)lysine. Position 96 is an N6-glutaryllysine; alternate (Lys96). Gln105 bears the N5-methylglutamine mark. Lys119 carries the N6-(2-hydroxyisobutyryl)lysine; alternate modification. Residues Lys119 and Lys120 each carry the N6-glutaryllysine; alternate modification. Residue Lys119 is modified to N6-crotonyllysine; alternate. Lys120 bears the N6-crotonyllysine mark. Position 121 is a phosphothreonine; by DCAF1 (Thr121). Lys126 carries the N6-glutaryllysine; alternate modification. An N6-crotonyllysine; alternate modification is found at Lys126. The [ST]-Q motif motif lies at 127–128; it reads SQ.

It belongs to the histone H2A family. The nucleosome is a histone octamer containing two molecules each of H2A, H2B, H3 and H4 assembled in one H3-H4 heterotetramer and two H2A-H2B heterodimers. The octamer wraps approximately 147 bp of DNA. Deiminated on Arg-4 in granulocytes upon calcium entry. In terms of processing, monoubiquitination of Lys-120 (H2AK119Ub) by RING1, TRIM37 and RNF2/RING2 complex gives a specific tag for epigenetic transcriptional repression and participates in X chromosome inactivation of female mammals. It is involved in the initiation of both imprinted and random X inactivation. Ubiquitinated H2A is enriched in inactive X chromosome chromatin. Ubiquitination of H2A functions downstream of methylation of 'Lys-27' of histone H3 (H3K27me). H2AK119Ub by RNF2/RING2 can also be induced by ultraviolet and may be involved in DNA repair. Following DNA double-strand breaks (DSBs), it is ubiquitinated through 'Lys-63' linkage of ubiquitin moieties by the E2 ligase UBE2N and the E3 ligases RNF8 and RNF168, leading to the recruitment of repair proteins to sites of DNA damage. Ubiquitination at Lys-14 and Lys-16 (H2AK13Ub and H2AK15Ub, respectively) in response to DNA damage is initiated by RNF168 that mediates monoubiquitination at these 2 sites, and 'Lys-63'-linked ubiquitin are then conjugated to monoubiquitin; RNF8 is able to extend 'Lys-63'-linked ubiquitin chains in vitro. H2AK119Ub and ionizing radiation-induced 'Lys-63'-linked ubiquitination (H2AK13Ub and H2AK15Ub) are distinct events. Post-translationally, phosphorylation on Ser-2 (H2AS1ph) is enhanced during mitosis. Phosphorylation on Ser-2 by RPS6KA5/MSK1 directly represses transcription. Acetylation of H3 inhibits Ser-2 phosphorylation by RPS6KA5/MSK1. Phosphorylation at Thr-121 (H2AT120ph) by DCAF1 is present in the regulatory region of many tumor suppresor genes and down-regulates their transcription. Symmetric dimethylation on Arg-4 by the PRDM1/PRMT5 complex may play a crucial role in the germ-cell lineage. In terms of processing, glutamine methylation at Gln-105 (H2AQ104me) by FBL is specifically dedicated to polymerase I. It is present at 35S ribosomal DNA locus and impairs binding of the FACT complex. Post-translationally, crotonylation (Kcr) is specifically present in male germ cells and marks testis-specific genes in post-meiotic cells, including X-linked genes that escape sex chromosome inactivation in haploid cells. Crotonylation marks active promoters and enhancers and confers resistance to transcriptional repressors. It is also associated with post-meiotically activated genes on autosomes. Lactylated in macrophages by EP300/P300 by using lactoyl-CoA directly derived from endogenous or exogenous lactate, leading to stimulates gene transcription. In terms of tissue distribution, testis.

The protein resides in the nucleus. The protein localises to the chromosome. In terms of biological role, core component of nucleosome. Nucleosomes wrap and compact DNA into chromatin, limiting DNA accessibility to the cellular machineries which require DNA as a template. Histones thereby play a central role in transcription regulation, DNA repair, DNA replication and chromosomal stability. DNA accessibility is regulated via a complex set of post-translational modifications of histones, also called histone code, and nucleosome remodeling. The polypeptide is Histone H2A type 4 (Rattus norvegicus (Rat)).